Consider the following 287-residue polypeptide: Pyridoxal 5'-phosphate synthase subunit PdxS (287 aa).

Aspartate 21 is a binding site for D-ribose 5-phosphate. The active-site Schiff-base intermediate with D-ribose 5-phosphate is the lysine 78. Glycine 150 lines the D-ribose 5-phosphate pocket. Arginine 162 contributes to the D-glyceraldehyde 3-phosphate binding site. D-ribose 5-phosphate contacts are provided by residues glycine 211 and 232-233; that span reads GS.

Belongs to the PdxS/SNZ family. In terms of assembly, in the presence of PdxT, forms a dodecamer of heterodimers.

It carries out the reaction aldehydo-D-ribose 5-phosphate + D-glyceraldehyde 3-phosphate + L-glutamine = pyridoxal 5'-phosphate + L-glutamate + phosphate + 3 H2O + H(+). It participates in cofactor biosynthesis; pyridoxal 5'-phosphate biosynthesis. In terms of biological role, catalyzes the formation of pyridoxal 5'-phosphate from ribose 5-phosphate (RBP), glyceraldehyde 3-phosphate (G3P) and ammonia. The ammonia is provided by the PdxT subunit. Can also use ribulose 5-phosphate and dihydroxyacetone phosphate as substrates, resulting from enzyme-catalyzed isomerization of RBP and G3P, respectively. The polypeptide is Pyridoxal 5'-phosphate synthase subunit PdxS (Tropheryma whipplei (strain Twist) (Whipple's bacillus)).